A 471-amino-acid chain; its full sequence is Putative pentatricopeptide repeat-containing protein At1g53330 (471 aa).

10 PPR repeats span residues 46–81, 82–116, 117–147, 151–185, 186–221, 222–256, 257–291, 292–326, 327–361, and 362–396; these read SLLC…RIVP, TEII…RCQR, TVKS…IDEF, DACT…KVKP, TGVT…GVRP, TVHI…KIKV, DAAI…GCKP, DTVT…GLKP, DVIS…GCSP, and DTLS…GYKP.

The protein belongs to the PPR family. P subfamily.

Functionally, involved during embryo development. The chain is Putative pentatricopeptide repeat-containing protein At1g53330 from Arabidopsis thaliana (Mouse-ear cress).